We begin with the raw amino-acid sequence, 144 residues long: Large ribosomal subunit protein uL15 (144 aa).

The tract at residues 20–49 is disordered; that stretch reads GRGIGSGLGKTGGRGHKGQKSRSGGFHKVG. Over residues 21–31 the composition is skewed to gly residues; the sequence is RGIGSGLGKTG.

It belongs to the universal ribosomal protein uL15 family. In terms of assembly, part of the 50S ribosomal subunit.

Binds to the 23S rRNA. The polypeptide is Large ribosomal subunit protein uL15 (Neisseria meningitidis serogroup A / serotype 4A (strain DSM 15465 / Z2491)).